The primary structure comprises 84 residues: Small ribosomal subunit protein uS17 (84 aa).

Belongs to the universal ribosomal protein uS17 family. Part of the 30S ribosomal subunit.

Functionally, one of the primary rRNA binding proteins, it binds specifically to the 5'-end of 16S ribosomal RNA. This is Small ribosomal subunit protein uS17 from Histophilus somni (strain 129Pt) (Haemophilus somnus).